The primary structure comprises 814 residues: DNA ligase (814 aa).

Residues 46-50, 95-96, and glutamate 129 each bind NAD(+); these read DAEYD and SL. The active-site N6-AMP-lysine intermediate is the lysine 131. Residues arginine 152, glutamate 189, lysine 305, and lysine 329 each contribute to the NAD(+) site. Zn(2+) contacts are provided by cysteine 434, cysteine 437, cysteine 458, and cysteine 464. Residues 526–549 form a disordered region; the sequence is SAQRRTEGEPAPKKPTKKKGEEED. Residues 735–814 form the BRCT domain; it reads TSAAAFAGKT…DDWLAMLAEA (80 aa).

It belongs to the NAD-dependent DNA ligase family. LigA subfamily. The cofactor is Mg(2+). Mn(2+) serves as cofactor.

It catalyses the reaction NAD(+) + (deoxyribonucleotide)n-3'-hydroxyl + 5'-phospho-(deoxyribonucleotide)m = (deoxyribonucleotide)n+m + AMP + beta-nicotinamide D-nucleotide.. Its function is as follows. DNA ligase that catalyzes the formation of phosphodiester linkages between 5'-phosphoryl and 3'-hydroxyl groups in double-stranded DNA using NAD as a coenzyme and as the energy source for the reaction. It is essential for DNA replication and repair of damaged DNA. This is DNA ligase from Methylorubrum extorquens (strain CM4 / NCIMB 13688) (Methylobacterium extorquens).